A 349-amino-acid polypeptide reads, in one-letter code: Small ribosomal subunit biogenesis GTPase RsgA (349 aa).

Residues 1 to 11 (MSKKKLSKGQQ) show a composition bias toward basic residues. A disordered region spans residues 1 to 29 (MSKKKLSKGQQRRVSANHQRRLKKTESKV). One can recognise a CP-type G domain in the interval 102–272 (HSVLTRPDYY…VIDSPGVREF (171 aa)). GTP contacts are provided by residues 158-161 (NKID) and 212-220 (GQSGVGKSS). 4 residues coordinate Zn(2+): Cys296, Cys301, His303, and Cys309.

This sequence belongs to the TRAFAC class YlqF/YawG GTPase family. RsgA subfamily. As to quaternary structure, monomer. Associates with 30S ribosomal subunit, binds 16S rRNA. Requires Zn(2+) as cofactor.

Its subcellular location is the cytoplasm. In terms of biological role, one of several proteins that assist in the late maturation steps of the functional core of the 30S ribosomal subunit. Helps release RbfA from mature subunits. May play a role in the assembly of ribosomal proteins into the subunit. Circularly permuted GTPase that catalyzes slow GTP hydrolysis, GTPase activity is stimulated by the 30S ribosomal subunit. The sequence is that of Small ribosomal subunit biogenesis GTPase RsgA from Pectobacterium carotovorum subsp. carotovorum (strain PC1).